A 127-amino-acid chain; its full sequence is Holo-[acyl-carrier-protein] synthase (127 aa).

Residues aspartate 8 and glutamate 59 each contribute to the Mg(2+) site.

It belongs to the P-Pant transferase superfamily. AcpS family. Mg(2+) is required as a cofactor.

The protein resides in the cytoplasm. The catalysed reaction is apo-[ACP] + CoA = holo-[ACP] + adenosine 3',5'-bisphosphate + H(+). Its function is as follows. Transfers the 4'-phosphopantetheine moiety from coenzyme A to a Ser of acyl-carrier-protein. This chain is Holo-[acyl-carrier-protein] synthase, found in Rickettsia bellii (strain OSU 85-389).